A 104-amino-acid chain; its full sequence is UPF0235 protein Paes_1868 (104 aa).

This sequence belongs to the UPF0235 family.

The chain is UPF0235 protein Paes_1868 from Prosthecochloris aestuarii (strain DSM 271 / SK 413).